Here is a 427-residue protein sequence, read N- to C-terminus: 3-phosphoshikimate 1-carboxyvinyltransferase (427 aa).

Lysine 22, serine 23, and arginine 27 together coordinate 3-phosphoshikimate. A phosphoenolpyruvate-binding site is contributed by lysine 22. Phosphoenolpyruvate is bound by residues glycine 96 and arginine 124. 3-phosphoshikimate is bound by residues serine 169, serine 170, glutamine 171, serine 197, aspartate 313, asparagine 336, and lysine 340. Glutamine 171 lines the phosphoenolpyruvate pocket. The active-site Proton acceptor is the aspartate 313. Phosphoenolpyruvate is bound by residues arginine 344, arginine 386, and lysine 411.

Belongs to the EPSP synthase family. In terms of assembly, monomer.

Its subcellular location is the cytoplasm. It carries out the reaction 3-phosphoshikimate + phosphoenolpyruvate = 5-O-(1-carboxyvinyl)-3-phosphoshikimate + phosphate. The protein operates within metabolic intermediate biosynthesis; chorismate biosynthesis; chorismate from D-erythrose 4-phosphate and phosphoenolpyruvate: step 6/7. In terms of biological role, catalyzes the transfer of the enolpyruvyl moiety of phosphoenolpyruvate (PEP) to the 5-hydroxyl of shikimate-3-phosphate (S3P) to produce enolpyruvyl shikimate-3-phosphate and inorganic phosphate. This Salmonella arizonae (strain ATCC BAA-731 / CDC346-86 / RSK2980) protein is 3-phosphoshikimate 1-carboxyvinyltransferase.